A 900-amino-acid chain; its full sequence is MYSKVFLKPHCEPEQPAALPLFQPQLVQGGRPDGYWVEAFPFRSDSSKCPNIIGYGLGTYDMKSDIQMLVNPYATTNNQSSSWTPVPLAKLDFPVAMHYADITKNGFNDVIITDQYGSSMDDIWAYGGRVSWLENPGELRDNWTMRTIGHSPGMHRLKAGHFTRTDRVQVVAVPIVVASSDLTTPADVIIFTAPDDPRSEQLWQRDVVGTRHLVHEVAIVPAAETDGEMRFDQIILAGRDGVDCLWYDGARWQRHLVGTGLPEERGDPYWGAGSAAVGRVGDDYAGYICSAEAFHGNTVSVYTKPAGSPTGIVRAEWTRHVLDVFGPLNGKHTGSIHQVVCADIDGDGEDEFLVAMMGADPPDFQRTGVWCYKLVDRTNMKFSKTKVSSVSAGRIATANFHSQGSEVDIATISYSVPGYFESPNPSINVFLSTGILAERLDEEVMLRVVRAGSTRFKTEMEFLDVAGKKLTLVVLPPFARLDVERNVSGVKVMAGTVCWADENGKHERVPATRPFGCESMIVSADYLESGEEGAILVLYKPSSTSGRPPFRSMDELVAHNLFPAYVPDSVRAMKFPWVRCADRPWAHGRFKDLDFFNLIGFHVNFADDSAAVLAHVQLWTAGIGVSAGFHNHVEASFCEIHACIANGTGRGGMRWATVPDANFNPDSPNLEDTELIVVPDMHEHGPLWRTRPDGHPLLRMNDTIDYPWHAWLAGAGNPSPQAFDVWVAFEFPGFETFSTPPPPRVLEPGRYAIRFGDPHQTASLALQKNDATDGTPVLALLDLDGGPSPQAWNISHVPGTDMYEIAHAKTGSLVCARWPPVKNQRVAGTHSPAAMGLTSRWAVTKNTKGQITFRLPEAPDHGPLFLSVSAIRHQQEADAIPVIVQGDSIELSAWSLVPAN.

Residues 1–433 form a dehydratase domain region; that stretch reads MYSKVFLKPH…NPSINVFLST (433 aa). Tyrosine 35 lines the ascopyrone M pocket. 5 residues coordinate Mg(2+): aspartate 101, threonine 103, asparagine 105, phenylalanine 107, and aspartate 109. Residues tyrosine 116, methionine 120, histidine 155, histidine 215, histidine 295, and histidine 337 each coordinate ascopyrone M. The active-site Proton acceptor is the histidine 155. Zn(2+) is bound by residues histidine 215, histidine 295, histidine 337, aspartate 343, aspartate 345, aspartate 347, glutamate 349, and glutamate 351. Positions 414, 419, and 627 each coordinate ascopyrone M. Residues 434 to 739 are isomerase domain; it reads GILAERLDEE…EFPGFETFST (306 aa). 1,5-anhydro-D-fructose is bound by residues alanine 627 and histidine 630. The Zn(2+) site is built by histidine 630, histidine 632, and glutamate 639. Residues glutamate 639 and histidine 641 each coordinate ascopyrone M. Histidine 641 is a binding site for 1,5-anhydro-D-fructose. Histidine 709 lines the Zn(2+) pocket. Tryptophan 726 is an ascopyrone M binding site. Tryptophan 726 is a 1,5-anhydro-D-fructose binding site.

Homodimer. It depends on Zn(2+) as a cofactor.

The catalysed reaction is 1,5-anhydro-D-fructose = microthecin + H2O. The enzyme catalyses 1,5-anhydro-D-fructose = ascopyrone M + H2O. It carries out the reaction ascopyrone M = microthecin. It catalyses the reaction 2-dehydro-D-glucose = cortalcerone + H2O. The protein operates within carbohydrate metabolism; 1,5-anhydro-D-fructose degradation. In terms of biological role, a bifunctional enzyme which catalyzes the dehydration of anhydrofructose into ascopyrone M, and the isomerization of ascopyrone M into microthecin. To a lesser extent, can also act on 2-dehydro-D-glucopyranose (D-glucosone), leading to the antibiotic cortalcerone. The chain is Aldos-2-ulose dehydratase from Phanerodontia chrysosporium (White-rot fungus).